We begin with the raw amino-acid sequence, 99 residues long: Small ribosomal subunit protein uS17 (99 aa).

This sequence belongs to the universal ribosomal protein uS17 family. In terms of assembly, part of the 30S ribosomal subunit.

In terms of biological role, one of the primary rRNA binding proteins, it binds specifically to the 5'-end of 16S ribosomal RNA. This Thermosipho africanus (strain TCF52B) protein is Small ribosomal subunit protein uS17.